Consider the following 357-residue polypeptide: MKIVTIVGARPQFIKLAPVSKEIRRHFEEIIIHTGQHYDFEMDKIFFDELEIPTPNYNLNIGSGSHGFQTGEMLKKIEEILLKEKPDLVLVYGDTNSTIAGALAGSKLNIKIAHVEAGLRSFDRKMPEEINRVLTDHISNILFTPTETADINLKNEGINSGIFNVGDVMYDSLLNALKLIEKKNFKILDELNISKKKYILATVHRAENTDIKENLENIINAFIESNEKIIFPVHPRTRKYLEKYRLFEKIKNYDNLKLISPVGYLEMIYLENNAKKILTDSGGVQKEAYFLKVPCVTLRNNTEWVETVLDGWNILVGSNKEKILENISKFNPASETYNYRFGEGNSSVKIVEVLRNL.

This sequence belongs to the UDP-N-acetylglucosamine 2-epimerase family.

In Methanococcus maripaludis (strain DSM 14266 / JCM 13030 / NBRC 101832 / S2 / LL), this protein is UDP-N-acetylglucosamine 2-epimerase homolog.